The sequence spans 309 residues: Glycine--tRNA ligase alpha subunit (309 aa).

The protein belongs to the class-II aminoacyl-tRNA synthetase family. Tetramer of two alpha and two beta subunits.

Its subcellular location is the cytoplasm. The enzyme catalyses tRNA(Gly) + glycine + ATP = glycyl-tRNA(Gly) + AMP + diphosphate. This Anaeromyxobacter sp. (strain K) protein is Glycine--tRNA ligase alpha subunit.